The primary structure comprises 255 residues: Putative F-box protein L126 (255 aa).

Positions 1 to 46 (MLPEEILFMVFSFLDVKELIACSHACSHACSQWRRICSDKLLWVQK) constitute an F-box domain.

This Acanthamoeba polyphaga (Amoeba) protein is Putative F-box protein L126.